The following is a 233-amino-acid chain: Uracil-DNA glycosylase (233 aa).

The active-site Proton acceptor is the D70.

It belongs to the uracil-DNA glycosylase (UDG) superfamily. UNG family.

The protein resides in the cytoplasm. The catalysed reaction is Hydrolyzes single-stranded DNA or mismatched double-stranded DNA and polynucleotides, releasing free uracil.. Functionally, excises uracil residues from the DNA which can arise as a result of misincorporation of dUMP residues by DNA polymerase or due to deamination of cytosine. In Helicobacter pylori (strain P12), this protein is Uracil-DNA glycosylase.